Reading from the N-terminus, the 69-residue chain is Small ribosomal subunit protein bS21 (69 aa).

A disordered region spans residues 50-69 (KAFKRKQAKKVRKLKQKTNR).

It belongs to the bacterial ribosomal protein bS21 family.

The sequence is that of Small ribosomal subunit protein bS21 from Borrelia garinii subsp. bavariensis (strain ATCC BAA-2496 / DSM 23469 / PBi) (Borreliella bavariensis).